The chain runs to 206 residues: MARYTGATCKLCRREGMKLFLKGDRCYTDKCAFVRRSYAPGQHGASRKKLSNYGTQLREKQKAKRIYGVLEGQFRNTYERAEKMRGIAGENLLKLLEMRLDNVVYRLGYGASRTEARQLVNHGHFLVNGKKVDIASFKVSVNDVITVCEKSRGSERFKMFAENPKALPKWLEANVENFEGKVIAEPAREDIDVPVNETLIVELYSK.

An S4 RNA-binding domain is found at 98–163 (MRLDNVVYRL…SERFKMFAEN (66 aa)).

Belongs to the universal ribosomal protein uS4 family. In terms of assembly, part of the 30S ribosomal subunit. Contacts protein S5. The interaction surface between S4 and S5 is involved in control of translational fidelity.

In terms of biological role, one of the primary rRNA binding proteins, it binds directly to 16S rRNA where it nucleates assembly of the body of the 30S subunit. Its function is as follows. With S5 and S12 plays an important role in translational accuracy. This is Small ribosomal subunit protein uS4A from Clostridium perfringens (strain SM101 / Type A).